A 67-amino-acid polypeptide reads, in one-letter code: Protein AaeX (67 aa).

2 helical membrane-spanning segments follow: residues Val3–Ile23 and Leu43–Ser63.

This sequence belongs to the AaeX family.

The protein resides in the cell membrane. The protein is Protein AaeX of Pantoea vagans (strain C9-1) (Pantoea agglomerans (strain C9-1)).